A 380-amino-acid chain; its full sequence is Protein kinase ORF15 (380 aa).

Residues 93-371 (FIPVKVAGCL…LLIAQLTKFI (279 aa)) form the Protein kinase domain. An ATP-binding site is contributed by lysine 118. The active-site Proton acceptor is the aspartate 217.

This sequence belongs to the protein kinase superfamily. Ser/Thr protein kinase family.

The enzyme catalyses L-seryl-[protein] + ATP = O-phospho-L-seryl-[protein] + ADP + H(+). The catalysed reaction is L-threonyl-[protein] + ATP = O-phospho-L-threonyl-[protein] + ADP + H(+). The polypeptide is Protein kinase ORF15 (ORF15) (Ictalurid herpesvirus 1 (strain Auburn) (IcHV-1)).